Consider the following 156-residue polypeptide: Small ribosomal subunit protein uS7 (156 aa).

It belongs to the universal ribosomal protein uS7 family. In terms of assembly, part of the 30S ribosomal subunit. Contacts proteins S9 and S11.

Functionally, one of the primary rRNA binding proteins, it binds directly to 16S rRNA where it nucleates assembly of the head domain of the 30S subunit. Is located at the subunit interface close to the decoding center, probably blocks exit of the E-site tRNA. The sequence is that of Small ribosomal subunit protein uS7 from Geotalea daltonii (strain DSM 22248 / JCM 15807 / FRC-32) (Geobacter daltonii).